The primary structure comprises 328 residues: UPF0252 protein PF0978 (328 aa).

A helical transmembrane segment spans residues 3-23 (VPLLILLFLVLTSGCIAPSTP).

This sequence belongs to the UPF0252 family.

It localises to the membrane. The polypeptide is UPF0252 protein PF0978 (Pyrococcus furiosus (strain ATCC 43587 / DSM 3638 / JCM 8422 / Vc1)).